We begin with the raw amino-acid sequence, 428 residues long: MESLTLQPIKKVNGEVNLPGSKSVSNRALLLAALAKGTTRLTNLLDSDDIRHMLNALTKLGVHYELSADKTVCVVEGLGRPFTATEAQELFLGNAGTAMRPLAAALCLGKGEFVLTGEPRMKERPIGHLVDALREAGAQIEYLENENYPPLKINATGLQAGTVNIDGSISSQFLTAFLMAAPLAQGEVKIHIVGELVSKPYIDITLHIMKQFGVDVVNNAYQEFIIPAGQSYVSPGQFLVEGDASSASYFLAAAAIKGGEIKVTGIGKNSIQGDIHFADALEKMGAEIEWGEDYVISRVGRLKGIDMDYNHIPDAAMTIATTALFAQGTTAIRNVYNWRVKETDRLSAMATELRKVGAEVEEGEDYLIVNPPQQLTHAAIDTYDDHRIAMCFSLVALSDTPVTINDPKCTSKTFPDYFDKLASLSELA.

3 residues coordinate 3-phosphoshikimate: Lys-22, Ser-23, and Arg-27. Residue Lys-22 participates in phosphoenolpyruvate binding. Residues Gly-96 and Arg-124 each coordinate phosphoenolpyruvate. 3-phosphoshikimate contacts are provided by Ser-170, Ser-171, Gln-172, Ser-198, Asp-314, Asn-337, and Lys-341. Gln-172 provides a ligand contact to phosphoenolpyruvate. The active-site Proton acceptor is the Asp-314. Phosphoenolpyruvate is bound by residues Arg-345, Arg-387, and Lys-412.

It belongs to the EPSP synthase family. Monomer.

The protein localises to the cytoplasm. The catalysed reaction is 3-phosphoshikimate + phosphoenolpyruvate = 5-O-(1-carboxyvinyl)-3-phosphoshikimate + phosphate. The protein operates within metabolic intermediate biosynthesis; chorismate biosynthesis; chorismate from D-erythrose 4-phosphate and phosphoenolpyruvate: step 6/7. Catalyzes the transfer of the enolpyruvyl moiety of phosphoenolpyruvate (PEP) to the 5-hydroxyl of shikimate-3-phosphate (S3P) to produce enolpyruvyl shikimate-3-phosphate and inorganic phosphate. The polypeptide is 3-phosphoshikimate 1-carboxyvinyltransferase (Vibrio vulnificus (strain YJ016)).